Reading from the N-terminus, the 55-residue chain is Large ribosomal subunit protein bL32c (55 aa).

The tract at residues 1–24 (MAVPKKRTSKSKKNARKANWKRKG) is disordered.

The protein belongs to the bacterial ribosomal protein bL32 family.

It localises to the plastid. The protein resides in the chloroplast. The polypeptide is Large ribosomal subunit protein bL32c (Phaeodactylum tricornutum (strain CCAP 1055/1)).